Consider the following 122-residue polypeptide: Large ribosomal subunit protein uL14 (122 aa).

It belongs to the universal ribosomal protein uL14 family. As to quaternary structure, part of the 50S ribosomal subunit. Forms a cluster with proteins L3 and L19. In the 70S ribosome, L14 and L19 interact and together make contacts with the 16S rRNA in bridges B5 and B8.

Its function is as follows. Binds to 23S rRNA. Forms part of two intersubunit bridges in the 70S ribosome. The sequence is that of Large ribosomal subunit protein uL14 from Carboxydothermus hydrogenoformans (strain ATCC BAA-161 / DSM 6008 / Z-2901).